A 235-amino-acid chain; its full sequence is Non-structural maintenance of chromosomes element 1 homolog (235 aa).

The RING-type; atypical zinc-finger motif lies at 181 to 225 (IKNCTLCKCLVLWDIRCGSCNIQYHRGCIQTYLQRRDICPSCGNL). At threonine 185 the chain carries Phosphothreonine.

It belongs to the NSE1 family. Component of the Smc5-Smc6 complex which consists at least of Smc5, Smc6, Nse1, Nse2, Nse4 and MAGE. Nse1, Nse4 and MAGE probably form a subcomplex that bridges the head domains of the Smc5-Smc6 heterodimer. Interacts with MAGE and Nse4.

The protein localises to the nucleus. The enzyme catalyses S-ubiquitinyl-[E2 ubiquitin-conjugating enzyme]-L-cysteine + [acceptor protein]-L-lysine = [E2 ubiquitin-conjugating enzyme]-L-cysteine + N(6)-ubiquitinyl-[acceptor protein]-L-lysine.. Component of the SMC5-SMC6 complex, a complex involved in repair of DNA double-strand breaks by homologous recombination. The complex may promote sister chromatid homologous recombination by recruiting the SMC1-SMC3 cohesin complex to double-strand breaks. The chain is Non-structural maintenance of chromosomes element 1 homolog from Drosophila melanogaster (Fruit fly).